The primary structure comprises 596 residues: Beta-glucuronidase (596 aa).

D-glucuronate-binding residues include aspartate 168 and asparagine 412. Catalysis depends on glutamate 413, which acts as the Proton donor. Residues asparagine 464, tyrosine 470, glutamate 502, tryptophan 547, and lysine 566 each contribute to the D-glucuronate site. Catalysis depends on glutamate 502, which acts as the Nucleophile. The N-K motif motif lies at 564–566 (NKK).

The protein belongs to the glycosyl hydrolase 2 family.

The protein resides in the cytoplasm. The enzyme catalyses a beta-D-glucuronoside + H2O = D-glucuronate + an alcohol. In terms of biological role, displays beta-glucuronidase activity with the artificial substrate p-nitrophenyl-beta-D-glucuronide (PNPG). Is probably involved in the metabolism of oligosaccharides containing the 3-O-beta-D-glucopyranosyl-beta-D-glucuronide structure released from bacterial and plant acidic carbohydrates. The protein is Beta-glucuronidase of Paenibacillus borealis.